A 319-amino-acid chain; its full sequence is Ribonuclease Z (319 aa).

Residues H62, H64, D66, H67, H139, D209, and H268 each coordinate Zn(2+). The active-site Proton acceptor is D66.

The protein belongs to the RNase Z family. Homodimer. The cofactor is Zn(2+).

It carries out the reaction Endonucleolytic cleavage of RNA, removing extra 3' nucleotides from tRNA precursor, generating 3' termini of tRNAs. A 3'-hydroxy group is left at the tRNA terminus and a 5'-phosphoryl group is left at the trailer molecule.. Zinc phosphodiesterase, which displays some tRNA 3'-processing endonuclease activity. Probably involved in tRNA maturation, by removing a 3'-trailer from precursor tRNA. This chain is Ribonuclease Z, found in Pseudomonas putida (strain GB-1).